A 390-amino-acid polypeptide reads, in one-letter code: Leu/Ile/Val-binding protein homolog 6 (390 aa).

Residues 1-21 form the signal peptide; that stretch reads MKKIALTALAVFSLAASAAYA.

It belongs to the leucine-binding protein family.

Functionally, component of an amino-acid transport system. This Brucella suis biovar 1 (strain 1330) protein is Leu/Ile/Val-binding protein homolog 6.